Consider the following 199-residue polypeptide: NAD(P)H dehydrogenase (quinone) (199 aa).

One can recognise a Flavodoxin-like domain in the interval 4-190 (VLVLYYSSYG…AMARFQGGHV (187 aa)). Residues 10-15 (SSYGHI) and 78-80 (TRF) each bind FMN. Tyr-12 contacts NAD(+). Trp-98 serves as a coordination point for substrate. FMN contacts are provided by residues 113 to 119 (STATQHG) and His-134.

Belongs to the WrbA family. The cofactor is FMN.

The enzyme catalyses a quinone + NADH + H(+) = a quinol + NAD(+). It carries out the reaction a quinone + NADPH + H(+) = a quinol + NADP(+). In Azoarcus sp. (strain BH72), this protein is NAD(P)H dehydrogenase (quinone).